The sequence spans 141 residues: Large ribosomal subunit protein uL16 (141 aa).

Belongs to the universal ribosomal protein uL16 family. In terms of assembly, part of the 50S ribosomal subunit.

In terms of biological role, binds 23S rRNA and is also seen to make contacts with the A and possibly P site tRNAs. This is Large ribosomal subunit protein uL16 from Geobacillus kaustophilus (strain HTA426).